The following is a 24-amino-acid chain: Lantibiotic 107891 (24 aa).

Position 2 is a (E)-2,3-didehydrobutyrine (threonine 2). The lanthionine (Ser-Cys) cross-link spans 3-7 (SWSLC). Tryptophan 4 bears the 6'-chlorotryptophan mark. Residue serine 5 is modified to 2,3-didehydroalanine (Ser). The beta-methyllanthionine (Thr-Cys) cross-link spans 8–11 (TPGC). 2 consecutive cross-links (lanthionine (Ser-Cys)) follow at residues 13–20 (SPGGGSNC) and 18–23 (SNCSFC). Proline 14 bears the 3,4-dihydroxyproline; in form A1 mark. At proline 14 the chain carries 4-hydroxyproline; in form A2. The segment at residues 21 to 24 (SFCC) is a cross-link (S-(2-aminovinyl)-D-cysteine (Ser-Cys)).

It belongs to the type A lantibiotic family. Maturation of lantibiotics involves the enzymatic conversion of Thr, and Ser into dehydrated AA and the formation of thioether bonds with cysteine. The C-terminal lanthionine undergoes decarboxylation. This is followed by membrane translocation and cleavage of the modified precursor. In terms of processing, occurs in 2 forms, A1 contains 3,4-dihydroxyproline at Pro-14, A2 contains 4-hydroxyproline at Pro-14. The patent report does not provide the stereochemistry of the modified prolines. Post-translationally, the patent report does not describe whether the 2,3-didehydrobutyrine is the E- or Z-isomer. In several diagrams it is shown as the E-isomer.

In terms of biological role, lanthionine-containing peptide antibiotic (lantibiotic) active on Gram-positive bacteria. The bactericidal activity of lantibiotics is based on depolarization of energized bacterial cytoplasmic membranes, initiated by the formation of aqueous transmembrane pores. The sequence is that of Lantibiotic 107891 from Microbispora sp. (strain 107891).